We begin with the raw amino-acid sequence, 94 residues long: Cell division topological specificity factor (94 aa).

It belongs to the MinE family.

In terms of biological role, prevents the cell division inhibition by proteins MinC and MinD at internal division sites while permitting inhibition at polar sites. This ensures cell division at the proper site by restricting the formation of a division septum at the midpoint of the long axis of the cell. This is Cell division topological specificity factor from Acetivibrio thermocellus (strain ATCC 27405 / DSM 1237 / JCM 9322 / NBRC 103400 / NCIMB 10682 / NRRL B-4536 / VPI 7372) (Clostridium thermocellum).